Reading from the N-terminus, the 708-residue chain is Polyribonucleotide nucleotidyltransferase (708 aa).

D490 and D496 together coordinate Mg(2+). In terms of domain architecture, KH spans 557 to 619 (PRIETMTIPK…KSIDDAIRLI (63 aa)). The 71-residue stretch at 629-699 (GEVYKGKVRS…KTGKFKLSRK (71 aa)) folds into the S1 motif domain.

This sequence belongs to the polyribonucleotide nucleotidyltransferase family. Mg(2+) is required as a cofactor.

Its subcellular location is the cytoplasm. It carries out the reaction RNA(n+1) + phosphate = RNA(n) + a ribonucleoside 5'-diphosphate. Functionally, involved in mRNA degradation. Catalyzes the phosphorolysis of single-stranded polyribonucleotides processively in the 3'- to 5'-direction. The sequence is that of Polyribonucleotide nucleotidyltransferase from Bacteroides fragilis (strain ATCC 25285 / DSM 2151 / CCUG 4856 / JCM 11019 / LMG 10263 / NCTC 9343 / Onslow / VPI 2553 / EN-2).